The sequence spans 237 residues: MNIFDRKINFDALLKFSHITPSTQQHLKKVYASFALCMFVAAAGAYVHVVTRFIQAGLLSALGALALMICLMATPHSHETEQKRLGLLAGFAFLTGVGLGPALELCIAINPSILPTAFMGTAMIFTCFSLSALYARRRSYLFLGGILMSAMSLMFVSSLGNLFFGSIWLFQANLYMGLLVMCGFVLFDTQLIIEKAEHGDKDYIWHCIDLFLDFVTLFRKLMLILAFNEKDKKKEKK.

Residues 1 to 29 lie on the Cytoplasmic side of the membrane; it reads MNIFDRKINFDALLKFSHITPSTQQHLKK. K7 participates in a covalent cross-link: Glycyl lysine isopeptide (Lys-Gly) (interchain with G-Cter in ubiquitin). A helical transmembrane segment spans residues 30–50; the sequence is VYASFALCMFVAAAGAYVHVV. Topologically, residues 51-52 are lumenal; sequence TR. The helical transmembrane segment at 53–73 threads the bilayer; the sequence is FIQAGLLSALGALALMICLMA. The Cytoplasmic portion of the chain corresponds to 74-86; that stretch reads TPHSHETEQKRLG. A helical transmembrane segment spans residues 87 to 107; it reads LLAGFAFLTGVGLGPALELCI. At 108 to 112 the chain is on the lumenal side; the sequence is AINPS. A helical membrane pass occupies residues 113 to 133; the sequence is ILPTAFMGTAMIFTCFSLSAL. The Cytoplasmic segment spans residues 134–139; the sequence is YARRRS. The chain crosses the membrane as a helical span at residues 140–160; the sequence is YLFLGGILMSAMSLMFVSSLG. Residues 161-166 lie on the Lumenal side of the membrane; that stretch reads NLFFGS. Residues 167–187 traverse the membrane as a helical segment; that stretch reads IWLFQANLYMGLLVMCGFVLF. Residues 188–206 are Cytoplasmic-facing; it reads DTQLIIEKAEHGDKDYIWH. The segment at residues 207–227 is an intramembrane region (helical); sequence CIDLFLDFVTLFRKLMLILAF. Residues 228–237 lie on the Cytoplasmic side of the membrane; it reads NEKDKKKEKK.

It belongs to the BI1 family. Interacts with BCL2 and BCL2L1. Interacts with ERN1. In terms of processing, ubiquitinated by BFAR, leading to proteasomal degradation. Highly abundant in adult testis.

It is found in the endoplasmic reticulum membrane. In terms of biological role, endoplasmic reticulum (ER)-resident protein that confers cellular protection as an anti-apoptotic protein by limiting multiple stress-inducing pathways surrounding the endoplasmic reticulum and mitochondria. Inhibits the activities of the key sensor for the endoplasmic reticulum unfolded protein response IRE1alpha/ERN1 both directly and by blocking BAX/BAK binding. Modulates ER calcium homeostasis by acting as a calcium-leak channel. Negatively regulates autophagy and autophagosome formation, especially during periods of nutrient deprivation, and reduces cell survival during starvation. This Rattus norvegicus (Rat) protein is Bax inhibitor 1 (Tmbim6).